The sequence spans 582 residues: DnaJ protein ERDJ3A (582 aa).

The N-terminal stretch at 1–25 is a signal peptide; that stretch reads MGIPVRSLLVASIVLSSIALHVAAA. The J domain maps to 29–93; that stretch reads DPYKVLGVDK…EKRKNYDLYG (65 aa). Asn61 carries an N-linked (GlcNAc...) asparagine glycan. Positions 178-201 are disordered; sequence GGSQHTGSAGKARRGTKSSGHDSS. Residues 407-437 are a coiled coil; sequence VKDLRSGIKELKNLLENFEKKNKKLASNQAK.

As to quaternary structure, interacts with BIP5.

The protein resides in the endoplasmic reticulum. It is found in the vacuole. Its function is as follows. May play a role in protein folding in the endoplasmic reticulum. The protein is DnaJ protein ERDJ3A of Oryza sativa subsp. japonica (Rice).